Reading from the N-terminus, the 516-residue chain is Lysophosphatidylcholine acyltransferase 2B (516 aa).

N-linked (GlcNAc...) asparagine glycosylation is present at Asn-28. 3 consecutive transmembrane segments (helical) span residues Thr-44–Val-64, Cys-68–Pro-88, and Leu-102–Val-122. The HXXXXD motif motif lies at His-142–Asp-147. EF-hand domains follow at residues Pro-387–Pro-422 and Asn-424–Val-459. Residues Asp-400, Asn-402, Asp-404, Thr-406, Glu-411, Asp-437, Asp-439, Asp-441, Tyr-443, and Glu-448 each contribute to the Ca(2+) site.

It belongs to the 1-acyl-sn-glycerol-3-phosphate acyltransferase family.

It is found in the membrane. It functions in the pathway lipid metabolism; phospholipid metabolism. Probable acetyltransferase. The polypeptide is Lysophosphatidylcholine acyltransferase 2B (Lpcat2b) (Mus musculus (Mouse)).